The chain runs to 152 residues: Putative aryl-alcohol dehydrogenase YFL057C (152 aa).

It belongs to the aldo/keto reductase family. Aldo/keto reductase 2 subfamily.

Putative aryl-alcohol dehydrogenase. The polypeptide is Putative aryl-alcohol dehydrogenase YFL057C (Saccharomyces cerevisiae (strain ATCC 204508 / S288c) (Baker's yeast)).